The following is a 613-amino-acid chain: Phosphoinositide phospholipase C 6 (613 aa).

Positions 137–281 (QDMTAPLSHY…LLHRIIISTK (145 aa)) constitute a PI-PLC X-box domain. Residues His152 and His198 contribute to the active site. The disordered stretch occupies residues 288–349 (ESRNPIVKQK…ASEDQKPAYK (62 aa)). A PI-PLC Y-box domain is found at 349 to 465 (KRLITIHAGK…GYVKKPNFLM (117 aa)). A C2 domain is found at 466–595 (KKGFHDEVFD…PGIRSVPLYD (130 aa)).

The cofactor is Ca(2+). As to expression, expressed in leaves, flowers and siliques, but not in roots.

The protein resides in the cell membrane. The catalysed reaction is a 1,2-diacyl-sn-glycero-3-phospho-(1D-myo-inositol-4,5-bisphosphate) + H2O = 1D-myo-inositol 1,4,5-trisphosphate + a 1,2-diacyl-sn-glycerol + H(+). Its function is as follows. The production of the second messenger molecules diacylglycerol (DAG) and inositol 1,4,5-trisphosphate (IP3) is mediated by activated phosphatidylinositol-specific phospholipase C enzymes. The protein is Phosphoinositide phospholipase C 6 (PLC6) of Arabidopsis thaliana (Mouse-ear cress).